The chain runs to 555 residues: TBCC domain-containing protein 1 (555 aa).

The 132-residue stretch at 302–433 (PEVSPMVIMS…LEDHMAQVGL (132 aa)) folds into the C-CAP/cofactor C-like domain.

It belongs to the TBCC family.

It is found in the cytoplasm. The protein localises to the cytoskeleton. The protein resides in the microtubule organizing center. It localises to the centrosome. Its subcellular location is the spindle pole. In terms of biological role, may play a role in the regulation of centrosome and Golgi apparatus positioning. This is TBCC domain-containing protein 1 (TBCCD1) from Gallus gallus (Chicken).